Here is a 522-residue protein sequence, read N- to C-terminus: MLCALILWSGLLGAARASPISVPRECAKGSEVWCQDLQAAAKCRAVRHCQSAVWNKPTVKSLPCSVCQDVAAAAGNGVNPGATESDILTSVMKTCEWLPSQESSAKCKWMVNNHSAAVLSMLSGAQETDLASVCTALTLCEPLQRHLAETTSERPLTQEDANEVMAPFLSNGALSFHPSQMPEGAVCHDCVQLISLLQDALESNLTLAEVTVQNQCQSMGPGLAALCENYIHRQFVPAKQTLQGLPPQEVCRKGGFCERESAHWLTRVAAVDGVPSLEMEMPRTNELQMQLGLTCDVCLNLVQELDKWLVTNSTEALISHTLERVCTVVPEPLVQQCITLVDTYSPELVQLMSKVTPEKVCETIKLCGSKRRARSISRAVATTPSLPVDEENQGSFCQGCKRLLGMSSQNLDHKSTKRDILNAFKGGCRILPLPYVMQCNRFVAEYEPVLIESLKFMMNPTDLCKKMGACHGPKTPLLGTDQCVMGPSFWCKSPEAAEMCNALEHCQRLVWKKPVSKINEQP.

The signal sequence occupies residues 1-17; it reads MLCALILWSGLLGAARA. Positions 18–59 are excised as a propeptide; sequence SPISVPRECAKGSEVWCQDLQAAAKCRAVRHCQSAVWNKPTV. One can recognise a Saposin A-type 1 domain in the interval 19–59; the sequence is PISVPRECAKGSEVWCQDLQAAAKCRAVRHCQSAVWNKPTV. Saposin B-type domains lie at 60-144, 183-261, 291-371, and 393-474; these read KSLP…EPLQ, EGAV…ERES, LGLT…GSKR, and QGSF…HGPK. 3 disulfides stabilise this stretch: Cys64/Cys140, Cys67/Cys134, and Cys95/Cys107. A propeptide spanning residues 146-183 is cleaved from the precursor; the sequence is HLAETTSERPLTQEDANEVMAPFLSNGALSFHPSQMPE. 3 disulfide bridges follow: Cys187–Cys257, Cys190–Cys251, and Cys216–Cys227. N-linked (GlcNAc...) asparagine glycosylation occurs at Asn204. A propeptide spanning residues 261-290 is cleaved from the precursor; that stretch reads SAHWLTRVAAVDGVPSLEMEMPRTNELQMQ. 3 cysteine pairs are disulfide-bonded: Cys295–Cys367, Cys298–Cys361, and Cys326–Cys337. An N-linked (GlcNAc...) (high mannose) asparagine glycan is attached at Asn312. Residues 371–392 constitute a propeptide that is removed on maturation; the sequence is RRARSISRAVATTPSLPVDEEN. 3 disulfide bridges follow: Cys397–Cys470, Cys400–Cys464, and Cys428–Cys439. Residues 475 to 522 constitute a propeptide that is removed on maturation; the sequence is TPLLGTDQCVMGPSFWCKSPEAAEMCNALEHCQRLVWKKPVSKINEQP. The 41-residue stretch at 476–516 folds into the Saposin A-type 2 domain; that stretch reads PLLGTDQCVMGPSFWCKSPEAAEMCNALEHCQRLVWKKPVS.

Its subcellular location is the secreted. Functionally, may activate the lysosomal degradation of sphingolipids. This Mus musculus (Mouse) protein is Proactivator polypeptide-like 1 (Psapl1).